The primary structure comprises 861 residues: MSDARIVAVGVEEEFHILDLTTRQLVPRAEEVLRRLDGDSFSPELLKSVVETNSQPTADLLELRTNLLDLRRRLAEVTGELGLGPAAAGTVPIVDMDLLDVSRDDRYEQMTEDYQIVAREQLICGAQVHVDVADRDLAMAVVAWTAPWLPMLLALSASSPFWMGADSGYASMRTLVWQRWPTAGVAGSFRTAAEYDQLVADLIKSGVISDPGMVYFDVRPSAHLPTVELRICDACPDVDNVILIAGLFRALVCQAIEEIEAGGQAPPPRAELLRAATWRAARSGLEGDLVDILGAGPIPAQAMLRRLLTEVRPQLERFDDWELIDNLAEQAVGRGSSAHRQRRAFARRGLLTDVADLVLAETRDVPPAGAAAALGSAPAVSASDQIAPRLLERYQPTGYDEIVDARGAVRPQYRAVMRTLERLGPGILDERVGTREAEQNDRGIVFRASGDSASRPFPFDLVPRIIAADDWTTLTTGLSQRVRALEAFLHDIYGERAAVADGIVPAWVVNDAPSLRHGGRAVGPDAIRVTVAGIDLVRGGDGGWLVLEDNLRVPSGIAYAMEGRRLAESVLPELGPPAGILRLDGIPALLHEALVAAAPAAATGDPAVAVLTGGKTDAAYFEHSLLAEKMGVALVEPADLLVDDNDVVYRIDGSRRCRVDVLYRRMDEDDLFGALGAAGTPLGLPLLRAIRARRVGIANALGNGVGDDKVVYAYVPRMVTYYLGEQPVLDDVPTYVCGDPEQCEHVLDNLDQLVVKPVDGYGGSGVVIGPHAEPYRLTEVRERILANPRQWIGQELVSLSTHPTWHDSHLEPCAVDLRVFVYAGREPRVVPAALSRVAPPGSLIVNSSQGGGSKDTWIPRR.

The segment at 1–372 is carboxylate-amine ligase; the sequence is MSDARIVAVG…RDVPPAGAAA (372 aa). The unknown stretch occupies residues 373–861; that stretch reads ALGSAPAVSA…GSKDTWIPRR (489 aa).

This sequence in the N-terminal section; belongs to the glutamate--cysteine ligase type 2 family. YbdK subfamily.

It catalyses the reaction L-cysteine + L-glutamate + ATP = gamma-L-glutamyl-L-cysteine + ADP + phosphate + H(+). ATP-dependent carboxylate-amine ligase which exhibits weak glutamate--cysteine ligase activity. The protein is Putative glutamate--cysteine ligase 2-2 of Frankia casuarinae (strain DSM 45818 / CECT 9043 / HFP020203 / CcI3).